The chain runs to 996 residues: MENAHTKSPAECLSYFGVNEHTGLSPDQFKKNLDKFGYNELPAEEGKSIWDLIVEQFEDLLVRILLLAACISFVLAWFEEGEETITAFVEPFVILLILIANAIVGVWQERNAEDAIEALKEYEPEMGKVYRSDRKSVQRIKAREIVPGDIVEVSVGDKVPADIRIVSIKSTTLRVDQSILTGESVSVIKHTESVPDPRAVNQDKKNMLFSGTNIAAGKAIGVAIATGVSTEIGKIRDQMAATEQEKTPLQAKLDEFGEQLSKVISLICVAVWAINIGHFNDPVHGGSWIRGAVYYFKIAVALAVAAIPEGLPAVITTCLALGTRRMAKKNAIVRSLPSVETLGCTSVICSDKTGTLTTNQMCVTKMFIVKSVDGDHVDLNAFDISGSKYTPEGEVSHGGSKTNCSAYDGLVELATICALCNDSSLDYNESKKIYEKVGEATETALCCLVEKMNVFNSNVKNLSRIERANACCTVIKQLMKKNFTLEFSRDRKSMSVYCTPAKGDGGAKMFVKGAPEGVIDRCAYVRVGTTRVPLTSAIKEKIMAVIRDWGTGRDTLRCLALATRDTPLKVEEMNLEDSTKFADYETDMTFVGCVGMLDPPRKEVTGSIELCRDAGIRVIMITGDNKGTAIAICRRIGIFKEDEDVSNKAYTGREFDDLPSQDQAEAVRRACCFARVEPSHKSKIVEFLQGNDDITAMTGDGVNDAPALKKAEIGIAMGSGTAVAKSASEMVLADDNFSSIVAAVEEGRAIYNNMKQFIRYLISSNVGEVVCIFLTAALGLPEALIPVQLLWVNLVTDGLPATALGFNPPDLDIMGKPPRSPKEPLISGWLFFRYMAIGGYVGAATVGGAAWWFLYDSTGPAVTYYQLSHFMQCHNHNEDFTGVDCDIFEASPPMTMALSVLVTIEMCNALNSLSENQSLIRMPPWSNLWLMAAMTLSMSLHFMIIYVDPLPMIFKLTHLTFDQWLMVFKLSFPVILIDEVLKFFARNYIETGKEVK.

Residues 1 to 48 (MENAHTKSPAECLSYFGVNEHTGLSPDQFKKNLDKFGYNELPAEEGKS) are Cytoplasmic-facing. Residues 49–69 (IWDLIVEQFEDLLVRILLLAA) traverse the membrane as a helical segment. The Lumenal portion of the chain corresponds to 70–89 (CISFVLAWFEEGEETITAFV). Residues 90 to 110 (EPFVILLILIANAIVGVWQER) form a helical membrane-spanning segment. Over 111–253 (NAEDAIEALK…QEKTPLQAKL (143 aa)) the chain is Cytoplasmic. The helical transmembrane segment at 254 to 273 (DEFGEQLSKVISLICVAVWA) threads the bilayer. At 274-295 (INIGHFNDPVHGGSWIRGAVYY) the chain is on the lumenal side. A helical transmembrane segment spans residues 296–313 (FKIAVALAVAAIPEGLPA). Ca(2+) is bound by residues V304, A305, I307, and E309. The Cytoplasmic segment spans residues 314–754 (VITTCLALGT…EEGRAIYNNM (441 aa)). D351 serves as the catalytic 4-aspartylphosphate intermediate. Mg(2+)-binding residues include D351 and T353. Residues T353, E442, R489, K512, R557, T622, G623, D624, R675, and K681 each contribute to the ATP site. Residue D700 participates in Mg(2+) binding. N703 provides a ligand contact to ATP. Residues 755-774 (KQFIRYLISSNVGEVVCIFL) form a helical membrane-spanning segment. Residues N765 and E768 each coordinate Ca(2+). At 775–784 (TAALGLPEAL) the chain is on the lumenal side. A helical membrane pass occupies residues 785 to 805 (IPVQLLWVNLVTDGLPATALG). The interval 785–805 (IPVQLLWVNLVTDGLPATALG) is interaction with PLN. Ca(2+) contacts are provided by N793, T796, and D797. The Cytoplasmic portion of the chain corresponds to 806-825 (FNPPDLDIMGKPPRSPKEPL). Residues 826–848 (ISGWLFFRYMAIGGYVGAATVGG) traverse the membrane as a helical segment. Over 849-894 (AAWWFLYDSTGPAVTYYQLSHFMQCHNHNEDFTGVDCDIFEASPPM) the chain is Lumenal. An intrachain disulfide couples C873 to C885. A helical transmembrane segment spans residues 895-914 (TMALSVLVTIEMCNALNSLS). E905 is a Ca(2+) binding site. Over 915–927 (ENQSLIRMPPWSN) the chain is Cytoplasmic. Residues 928–946 (LWLMAAMTLSMSLHFMIIY) form a helical membrane-spanning segment. An interaction with PLN region spans residues 929-940 (WLMAAMTLSMSL). The Lumenal portion of the chain corresponds to 947 to 961 (VDPLPMIFKLTHLTF). A helical transmembrane segment spans residues 962 to 982 (DQWLMVFKLSFPVILIDEVLK). The Cytoplasmic segment spans residues 983-996 (FFARNYIETGKEVK).

Belongs to the cation transport ATPase (P-type) (TC 3.A.3) family. Type IIA subfamily. Interacts with sarcolipin (SLN). Interacts with phospholamban (PLN). Interacts with myoregulin (MRLN). Interacts with DWORF. The cofactor is Mg(2+).

The protein localises to the endoplasmic reticulum membrane. It is found in the sarcoplasmic reticulum membrane. The catalysed reaction is Ca(2+)(in) + ATP + H2O = Ca(2+)(out) + ADP + phosphate + H(+). Its activity is regulated as follows. Inhibited by sarcolipin (SLN) and myoregulin (MRLN). Also shown to be inhibited by phospholamban (PLN) in vitro. Enhanced by DWORF; DWORF increases activity by displacing sarcolipin (SLN), phospholamban (PLN) and myoregulin (MRLN). In terms of biological role, key regulator of striated muscle performance by acting as the major Ca(2+) ATPase responsible for the reuptake of cytosolic Ca(2+) into the sarcoplasmic reticulum. Catalyzes the hydrolysis of ATP coupled with the translocation of calcium from the cytosol to the sarcoplasmic reticulum lumen. Contributes to calcium sequestration involved in muscular excitation/contraction. The sequence is that of Sarcoplasmic/endoplasmic reticulum calcium ATPase 1 (atp2a1) from Makaira nigricans (Atlantic blue marlin).